The chain runs to 394 residues: Ceramide glucosyltransferase-B (394 aa).

Over 1-10 the chain is Lumenal; it reads MAVLDLALQG. Residues 11–32 traverse the membrane as a helical segment; the sequence is LAIFGCILFFVLWFMHFLSIVY. Residues 33 to 195 are Cytoplasmic-facing; that stretch reads TRLHLNKKVS…QVYFGTSHPR (163 aa). Asp92 is a short sequence motif (D1). Residue Asp144 is a short sequence motif, D2. Residues 196–215 traverse the membrane as a helical segment; sequence SYISANVTGIKCVTGMSCLM. The Lumenal portion of the chain corresponds to 216-287; sequence RKEVLDQAGG…KLRINMLPAT (72 aa). Position 236 (Asp236) is a short sequence motif, D3. Asp236 (proton acceptor) is an active-site residue. The (Q/R)XXRW motif lies at 272 to 276; that stretch reads RMIRW. The helical transmembrane segment at 288–304 threads the bilayer; that stretch reads IICEPISECFVASLIIG. The Cytoplasmic segment spans residues 305 to 309; the sequence is WAAHH. The chain crosses the membrane as a helical span at residues 310-328; the sequence is IFRWDIMVFFMCHCLAWFI. At 329–348 the chain is on the lumenal side; that stretch reads FDYIQLRGVQGGPLNFSKLD. A helical membrane pass occupies residues 349–369; the sequence is YAVAWFIRESMTIYIFLSALW. The Cytoplasmic segment spans residues 370–394; it reads DPTISWRTGRYRLRCGGTAEEILDV.

This sequence belongs to the glycosyltransferase 2 family.

Its subcellular location is the golgi apparatus membrane. The catalysed reaction is an N-acylsphing-4-enine + UDP-alpha-D-glucose = a beta-D-glucosyl-(1&lt;-&gt;1')-N-acylsphing-4-enine + UDP + H(+). It carries out the reaction UDP-alpha-D-xylose + an N-acylsphing-4-enine = a beta-D-xylosyl-(1&lt;-&gt;1')-N-acylsphing-4-enine + UDP + H(+). It catalyses the reaction N-(9Z-octadecenoyl)-sphing-4-enine + UDP-alpha-D-xylose = beta-D-xylosyl-(1&lt;-&gt;1')-N-(9Z-octadecenoyl)-sphing-4-enine + UDP + H(+). Its pathway is lipid metabolism; sphingolipid metabolism. Its function is as follows. Participates in the initial step of the glucosylceramide-based glycosphingolipid/GSL synthetic pathway at the cytosolic surface of the Golgi. Catalyzes the transfer of glucose from UDP-glucose to ceramide to produce glucosylceramide/GlcCer (such as beta-D-glucosyl-(1&lt;-&gt;1')-N-acylsphing-4-enine). Glucosylceramide is the core component of glycosphingolipids/GSLs, amphipathic molecules consisting of a ceramide lipid moiety embedded in the outer leaflet of the membrane, linked to one of hundreds of different externally oriented oligosaccharide structures. Glycosphingolipids are essential components of membrane microdomains that mediate membrane trafficking and signal transduction. They are implicated in many fundamental cellular processes, including growth, differentiation, migration, morphogenesis, cell-to-cell and cell-to-matrix interactions. Catalyzes the synthesis of xylosylceramide/XylCer (such as beta-D-xylosyl-(1&lt;-&gt;1')-N-acylsphing-4-enine) using UDP-Xyl as xylose donor. This chain is Ceramide glucosyltransferase-B (ugcg-b), found in Xenopus laevis (African clawed frog).